The sequence spans 802 residues: Penicillin G acylase (802 aa).

The signal sequence occupies residues 1 to 24; that stretch reads MKTKWLISVIILFVFIFPQNLVFA. Residue E177 participates in Ca(2+) binding. Residues 235 to 265 constitute a propeptide, spacer peptide; sequence SAVIKASEKVGKERENFVQTSEELGLPLKIG. Residue S266 is the Nucleophile of the active site. D341 serves as a coordination point for Ca(2+).

This sequence belongs to the peptidase S45 family. As to quaternary structure, heterodimer of an alpha subunit and a beta subunit processed from the same precursor. The cofactor is Ca(2+).

The protein resides in the secreted. It carries out the reaction a penicillin + H2O = 6-aminopenicillanate + a carboxylate. The sequence is that of Penicillin G acylase (pac) from Priestia megaterium (Bacillus megaterium).